Reading from the N-terminus, the 427-residue chain is Enolase 1 (427 aa).

Glutamine 162 contributes to the (2R)-2-phosphoglycerate binding site. Glutamate 204 (proton donor) is an active-site residue. Aspartate 241, glutamate 285, and aspartate 312 together coordinate Mg(2+). The (2R)-2-phosphoglycerate site is built by lysine 337, arginine 366, serine 367, and lysine 388. Lysine 337 serves as the catalytic Proton acceptor.

It belongs to the enolase family. The cofactor is Mg(2+).

It localises to the cytoplasm. The protein resides in the secreted. It is found in the cell surface. The enzyme catalyses (2R)-2-phosphoglycerate = phosphoenolpyruvate + H2O. Its pathway is carbohydrate degradation; glycolysis; pyruvate from D-glyceraldehyde 3-phosphate: step 4/5. Its function is as follows. Catalyzes the reversible conversion of 2-phosphoglycerate (2-PG) into phosphoenolpyruvate (PEP). It is essential for the degradation of carbohydrates via glycolysis. In Chlorobaculum tepidum (strain ATCC 49652 / DSM 12025 / NBRC 103806 / TLS) (Chlorobium tepidum), this protein is Enolase 1.